Consider the following 345-residue polypeptide: Flotillin-like protein FloA 1 (345 aa).

The chain crosses the membrane as a helical span at residues 26–46 (LLLLVGVFLALFFAAVLGFFF).

The protein belongs to the flotillin-like FloA family. In terms of assembly, homooligomerizes.

Its subcellular location is the cell membrane. The protein resides in the membrane raft. Functionally, found in functional membrane microdomains (FMM) that may be equivalent to eukaryotic membrane rafts. FMMs are highly dynamic and increase in number as cells age. Flotillins are thought to be important factors in membrane fluidity. The protein is Flotillin-like protein FloA 1 of Rhodopirellula baltica (strain DSM 10527 / NCIMB 13988 / SH1).